The sequence spans 196 residues: Transcription repressor OFP10 (196 aa).

The region spanning 100-159 (MAKESINPFEDYKKSMNQMIEERYIETESELKELLRCFLDINPSPQHNLIVRAFVDVCSH) is the OVATE domain.

Expressed in roots, cauline leaves, shoots, stems, flower buds and siliques.

Its subcellular location is the nucleus. Its function is as follows. Transcriptional repressor that may regulate multiple aspects of plant growth and development through the regulation of BEL1-LIKE (BLH) and KNOX TALE (KNAT) homeodomain transcription factors. This is Transcription repressor OFP10 (OFP10) from Arabidopsis thaliana (Mouse-ear cress).